Here is an 88-residue protein sequence, read N- to C-terminus: Probable small nuclear ribonucleoprotein F (88 aa).

Positions 7–79 constitute a Sm domain; it reads NPKPFLNNLT…VLYVRGVPED (73 aa).

The protein belongs to the snRNP Sm proteins family. SmF/LSm6 subfamily.

The protein resides in the nucleus. Probable common Sm protein, is found in U1 and U2 snRNPs and may be part of the spliceosome. In Arabidopsis thaliana (Mouse-ear cress), this protein is Probable small nuclear ribonucleoprotein F.